The sequence spans 1654 residues: Outer membrane protein B (1654 aa).

Positions Gly-1334 to Ala-1361 are excised as a propeptide. In terms of domain architecture, Autotransporter spans Ile-1366–Phe-1654.

This sequence belongs to the rickettsiae OmpA/OmpB family. In terms of processing, the N-terminus is blocked.

Its subcellular location is the periplasm. The protein localises to the secreted. It is found in the cell surface. The protein resides in the cell outer membrane. Functionally, the 120 kDa surface-exposed protein is a major structural protein which may play a role as a rickettsial virulence factor and/or immunogen during infection. The 32 kDa beta peptide may serve as a membrane anchor. The sequence is that of Outer membrane protein B (ompB) from Rickettsia rickettsii.